Consider the following 445-residue polypeptide: ATP synthase subunit b-delta (445 aa).

Positions 1–168 (MSTFIGQLVG…PAAAEVERPV (168 aa)) are ATP synthase subunit b. The chain crosses the membrane as a helical span at residues 4-24 (FIGQLVGFAAIVFLVWRYVVP). An ATP synthase subunit delta region spans residues 169-445 (AAKMRSASRR…LTAAEAQLPD (277 aa)).

In the N-terminal section; belongs to the ATPase B chain family. It in the C-terminal section; belongs to the ATPase delta chain family. As to quaternary structure, F-type ATPases have 2 components, F(1) - the catalytic core - and F(0) - the membrane proton channel. F(1) has five subunits: alpha(3), beta(3), gamma(1), delta(1), epsilon(1). F(0) has three main subunits: a(1), b(2) and c(10-14). The alpha and beta chains form an alternating ring which encloses part of the gamma chain. F(1) is attached to F(0) by a central stalk formed by the gamma and epsilon chains, while a peripheral stalk is formed by the delta and b chains.

It localises to the cell membrane. Functionally, f(1)F(0) ATP synthase produces ATP from ADP in the presence of a proton or sodium gradient. F-type ATPases consist of two structural domains, F(1) containing the extramembraneous catalytic core and F(0) containing the membrane proton channel, linked together by a central stalk and a peripheral stalk. During catalysis, ATP synthesis in the catalytic domain of F(1) is coupled via a rotary mechanism of the central stalk subunits to proton translocation. In terms of biological role, this fusion protein includes a component of the F(0) channel (subunit b) and of the F(1) subunit (subunit delta). Two copies of subunit b and one of delta together form the peripheral 'stator' stalk which links F(1) to F(0). The protein is ATP synthase subunit b-delta (atpFH) of Mycobacterium ulcerans (strain Agy99).